We begin with the raw amino-acid sequence, 142 residues long: Large ribosomal subunit protein uL11 (142 aa).

It belongs to the universal ribosomal protein uL11 family. In terms of assembly, part of the ribosomal stalk of the 50S ribosomal subunit. Interacts with L10 and the large rRNA to form the base of the stalk. L10 forms an elongated spine to which L12 dimers bind in a sequential fashion forming a multimeric L10(L12)X complex. In terms of processing, one or more lysine residues are methylated.

Forms part of the ribosomal stalk which helps the ribosome interact with GTP-bound translation factors. The protein is Large ribosomal subunit protein uL11 of Sinorhizobium medicae (strain WSM419) (Ensifer medicae).